The primary structure comprises 326 residues: Beta-ketoacyl-[acyl-carrier-protein] synthase III (326 aa).

Active-site residues include Cys-112 and His-251. Residues 252 to 256 form an ACP-binding region; sequence QANSR. The active site involves Asn-281.

Belongs to the thiolase-like superfamily. FabH family. Homodimer.

It localises to the cytoplasm. The enzyme catalyses malonyl-[ACP] + acetyl-CoA + H(+) = 3-oxobutanoyl-[ACP] + CO2 + CoA. The protein operates within lipid metabolism; fatty acid biosynthesis. Functionally, catalyzes the condensation reaction of fatty acid synthesis by the addition to an acyl acceptor of two carbons from malonyl-ACP. Catalyzes the first condensation reaction which initiates fatty acid synthesis and may therefore play a role in governing the total rate of fatty acid production. Possesses both acetoacetyl-ACP synthase and acetyl transacylase activities. Its substrate specificity determines the biosynthesis of branched-chain and/or straight-chain of fatty acids. This chain is Beta-ketoacyl-[acyl-carrier-protein] synthase III, found in Clostridium botulinum (strain Okra / Type B1).